We begin with the raw amino-acid sequence, 162 residues long: uncharacterized protein (162 aa).

The signal sequence occupies residues 1-21; sequence MRLCGLLIFLSYIVYVDNAVT.

This is an uncharacterized protein from Caenorhabditis elegans.